Consider the following 310-residue polypeptide: Ribosomal RNA small subunit methyltransferase H (310 aa).

S-adenosyl-L-methionine contacts are provided by residues 33-35 (AGH), aspartate 53, phenylalanine 79, aspartate 100, and glutamine 107.

Belongs to the methyltransferase superfamily. RsmH family.

It localises to the cytoplasm. It catalyses the reaction cytidine(1402) in 16S rRNA + S-adenosyl-L-methionine = N(4)-methylcytidine(1402) in 16S rRNA + S-adenosyl-L-homocysteine + H(+). In terms of biological role, specifically methylates the N4 position of cytidine in position 1402 (C1402) of 16S rRNA. This Clostridium botulinum (strain Alaska E43 / Type E3) protein is Ribosomal RNA small subunit methyltransferase H.